The chain runs to 306 residues: Foldase protein PrsA (306 aa).

Positions 1-20 are cleaved as a signal peptide; it reads MRRKIALFLALIFVGVSLVS. Cys21 is lipidated: N-palmitoyl cysteine. Cys21 is lipidated: S-diacylglycerol cysteine. A PpiC domain is found at 165-255; it reads FEVMRARHIL…YGYHIIKSEG (91 aa).

It belongs to the PrsA family.

It is found in the cell membrane. It carries out the reaction [protein]-peptidylproline (omega=180) = [protein]-peptidylproline (omega=0). In terms of biological role, plays a major role in protein secretion by helping the post-translocational extracellular folding of several secreted proteins. This chain is Foldase protein PrsA, found in Caldanaerobacter subterraneus subsp. tengcongensis (strain DSM 15242 / JCM 11007 / NBRC 100824 / MB4) (Thermoanaerobacter tengcongensis).